The sequence spans 152 residues: B3 domain-containing protein At1g10455 (152 aa).

The segment at residues 24 to 131 (LKKKLSDSDL…EVKFKHFKSQ (108 aa)) is a DNA-binding region (TF-B3).

Its subcellular location is the nucleus. The chain is B3 domain-containing protein At1g10455 from Arabidopsis thaliana (Mouse-ear cress).